We begin with the raw amino-acid sequence, 248 residues long: Triosephosphate isomerase (248 aa).

Substrate is bound at residue 14 to 16; it reads NWK. Residue His-99 is the Electrophile of the active site. Glu-170 functions as the Proton acceptor in the catalytic mechanism. Substrate-binding positions include Gly-176, Ser-212, and 233–234; that span reads GG.

Belongs to the triosephosphate isomerase family. In terms of assembly, homodimer.

It localises to the cytoplasm. It catalyses the reaction D-glyceraldehyde 3-phosphate = dihydroxyacetone phosphate. The protein operates within carbohydrate biosynthesis; gluconeogenesis. It participates in carbohydrate degradation; glycolysis; D-glyceraldehyde 3-phosphate from glycerone phosphate: step 1/1. Its function is as follows. Involved in the gluconeogenesis. Catalyzes stereospecifically the conversion of dihydroxyacetone phosphate (DHAP) to D-glyceraldehyde-3-phosphate (G3P). The chain is Triosephosphate isomerase from Bordetella bronchiseptica (strain ATCC BAA-588 / NCTC 13252 / RB50) (Alcaligenes bronchisepticus).